We begin with the raw amino-acid sequence, 94 residues long: Large ribosomal subunit protein eL43B (94 aa).

A C4-type zinc finger spans residues 39 to 62 (CPFCGRLTVKRTAAGIWKCSGKGC).

This sequence belongs to the eukaryotic ribosomal protein eL43 family. As to quaternary structure, component of the large ribosomal subunit (LSU). Mature yeast ribosomes consist of a small (40S) and a large (60S) subunit. The 40S small subunit contains 1 molecule of ribosomal RNA (18S rRNA) and at least 33 different proteins. The large 60S subunit contains 3 rRNA molecules (25S, 5.8S and 5S rRNA) and at least 46 different proteins.

The protein localises to the cytoplasm. Its function is as follows. Component of the ribosome, a large ribonucleoprotein complex responsible for the synthesis of proteins in the cell. The small ribosomal subunit (SSU) binds messenger RNAs (mRNAs) and translates the encoded message by selecting cognate aminoacyl-transfer RNA (tRNA) molecules. The large subunit (LSU) contains the ribosomal catalytic site termed the peptidyl transferase center (PTC), which catalyzes the formation of peptide bonds, thereby polymerizing the amino acids delivered by tRNAs into a polypeptide chain. The nascent polypeptides leave the ribosome through a tunnel in the LSU and interact with protein factors that function in enzymatic processing, targeting, and the membrane insertion of nascent chains at the exit of the ribosomal tunnel. The sequence is that of Large ribosomal subunit protein eL43B (rpl4302) from Schizosaccharomyces pombe (strain 972 / ATCC 24843) (Fission yeast).